A 252-amino-acid chain; its full sequence is NAC domain-containing protein 83 (252 aa).

The NAC domain maps to 14 to 160 (LPPGFRFHPT…NWVLCRIFLK (147 aa)). Residues 110–166 (VGLKKTLVFYKGKPPHGSRTDWIMHEYRLSSSPPSSMGPTQNWVLCRIFLKKRAGNK) mediate DNA binding. Disordered regions lie at residues 165-194 (NKND…IITT) and 217-252 (LNLL…NSFR). Low complexity-rich tracts occupy residues 180-194 (NNNN…IITT) and 219-252 (LLPS…NSFR). The tract at residues 213–226 (RTTDLNLLPSSPSS) is PEST-like.

In terms of assembly, interacts with NAC007/VND4, NAC026/VND5 and NAC030/VND7. Interacts with the mungbean yellow mosaic virus (MYMV) AC1 replication-associated protein. Expressed in xylem and phloem cells in roots and inflorescence stems. Highly expressed in senescent leaves. Expressed in roots, and abscission and dehiscence tissues, such as axils of bracts and abscission zones in cauline leaves and siliques.

It localises to the nucleus. Functionally, transcriptional repressor that negatively regulates the expression of genes involved in xylem vessel formation. Represses the transcriptional activation activity of NAC030/VND7, which regulates protoxylem vessel differentiation by promoting immature xylem vessel-specific genes expression. Transcriptional activator that regulates the COLD-REGULATED (COR15A and COR15B) and RESPONSIVE TO DEHYDRATION (LTI78/RD29A and LTI65/RD29B) genes by binding directly to their promoters. Mediates signaling crosstalk between salt stress response and leaf aging process. May play a role in DNA replication of mungbean yellow mosaic virus. The chain is NAC domain-containing protein 83 from Arabidopsis thaliana (Mouse-ear cress).